Consider the following 253-residue polypeptide: Ditrans,polycis-undecaprenyl-diphosphate synthase ((2E,6E)-farnesyl-diphosphate specific) (253 aa).

The active site involves D25. D25 lines the Mg(2+) pocket. Substrate is bound by residues 26 to 29 (GNGR), W30, R38, H42, and 70 to 72 (SSE). The active-site Proton acceptor is N73. The substrate site is built by W74, R76, and R193. Residue H198 participates in Mg(2+) binding. Position 199 to 201 (199 to 201 (RIS)) interacts with substrate. Residue E212 participates in Mg(2+) binding.

Belongs to the UPP synthase family. As to quaternary structure, homodimer. The cofactor is Mg(2+).

The catalysed reaction is 8 isopentenyl diphosphate + (2E,6E)-farnesyl diphosphate = di-trans,octa-cis-undecaprenyl diphosphate + 8 diphosphate. Functionally, catalyzes the sequential condensation of isopentenyl diphosphate (IPP) with (2E,6E)-farnesyl diphosphate (E,E-FPP) to yield (2Z,6Z,10Z,14Z,18Z,22Z,26Z,30Z,34E,38E)-undecaprenyl diphosphate (di-trans,octa-cis-UPP). UPP is the precursor of glycosyl carrier lipid in the biosynthesis of bacterial cell wall polysaccharide components such as peptidoglycan and lipopolysaccharide. This is Ditrans,polycis-undecaprenyl-diphosphate synthase ((2E,6E)-farnesyl-diphosphate specific) from Pectobacterium atrosepticum (strain SCRI 1043 / ATCC BAA-672) (Erwinia carotovora subsp. atroseptica).